Consider the following 336-residue polypeptide: 3-isopropylmalate dehydrogenase (336 aa).

The substrate site is built by R87, R97, R121, and D211. D211, D235, and D239 together coordinate Mg(2+). 271–283 (GSAPDIAGQGIAD) is an NAD(+) binding site.

This sequence belongs to the isocitrate and isopropylmalate dehydrogenases family. LeuB type 2 subfamily. In terms of assembly, homodimer. The cofactor is Mg(2+). Mn(2+) serves as cofactor.

The protein resides in the cytoplasm. It carries out the reaction (2R,3S)-3-isopropylmalate + NAD(+) = 4-methyl-2-oxopentanoate + CO2 + NADH. It participates in amino-acid biosynthesis; L-leucine biosynthesis; L-leucine from 3-methyl-2-oxobutanoate: step 3/4. Its function is as follows. Catalyzes the oxidation of 3-carboxy-2-hydroxy-4-methylpentanoate (3-isopropylmalate) to 3-carboxy-4-methyl-2-oxopentanoate. The product decarboxylates to 4-methyl-2 oxopentanoate. This chain is 3-isopropylmalate dehydrogenase, found in Rhodococcus opacus (strain B4).